The chain runs to 231 residues: 2-amino-5-formylamino-6-ribosylaminopyrimidin-4(3H)-one 5'-monophosphate deformylase (231 aa).

E29, H31, D40, and H110 together coordinate Fe cation.

Belongs to the creatininase superfamily. FAPy deformylase family. As to quaternary structure, homodimer. Fe(2+) is required as a cofactor. The cofactor is Zn(2+).

It carries out the reaction 2-amino-5-formylamino-6-(5-phospho-D-ribosylamino)pyrimidin-4(3H)-one + H2O = 2,5-diamino-6-(1-D-ribosylamino)pyrimidin-4(3H)-one 5'-phosphate + formate + H(+). Its pathway is cofactor biosynthesis; coenzyme F420 biosynthesis. It participates in cofactor biosynthesis; riboflavin biosynthesis. Its function is as follows. Catalyzes the hydrolysis of the formamide of 2-amino-5-formylamino-6-ribosylamino-4(3H)-pyrimidinone 5'-monophosphate (FAPy) to form 2,5-diamino-6-ribosylamino-4(3H)-pyrimidinone 5'-phosphate (APy). This is 2-amino-5-formylamino-6-ribosylaminopyrimidin-4(3H)-one 5'-monophosphate deformylase from Methanothermobacter marburgensis (strain ATCC BAA-927 / DSM 2133 / JCM 14651 / NBRC 100331 / OCM 82 / Marburg) (Methanobacterium thermoautotrophicum).